The primary structure comprises 666 residues: tRNA 5-methylaminomethyl-2-thiouridine biosynthesis bifunctional protein MnmC (666 aa).

Residues 1–245 (MKQYAIQPAN…KREMLCGVMA (245 aa)) form a tRNA (mnm(5)s(2)U34)-methyltransferase region. Positions 270 to 666 (IGGGIASALL…RKLLKGKAVK (397 aa)) are FAD-dependent cmnm(5)s(2)U34 oxidoreductase.

It in the N-terminal section; belongs to the methyltransferase superfamily. tRNA (mnm(5)s(2)U34)-methyltransferase family. This sequence in the C-terminal section; belongs to the DAO family. FAD is required as a cofactor.

Its subcellular location is the cytoplasm. It carries out the reaction 5-aminomethyl-2-thiouridine(34) in tRNA + S-adenosyl-L-methionine = 5-methylaminomethyl-2-thiouridine(34) in tRNA + S-adenosyl-L-homocysteine + H(+). Its function is as follows. Catalyzes the last two steps in the biosynthesis of 5-methylaminomethyl-2-thiouridine (mnm(5)s(2)U) at the wobble position (U34) in tRNA. Catalyzes the FAD-dependent demodification of cmnm(5)s(2)U34 to nm(5)s(2)U34, followed by the transfer of a methyl group from S-adenosyl-L-methionine to nm(5)s(2)U34, to form mnm(5)s(2)U34. The chain is tRNA 5-methylaminomethyl-2-thiouridine biosynthesis bifunctional protein MnmC from Citrobacter koseri (strain ATCC BAA-895 / CDC 4225-83 / SGSC4696).